Reading from the N-terminus, the 61-residue chain is MAKDIITGRHTTFGNKRSHALNSSRRQWKANLHKVRILVDGKPKRVWVSARALKSGKLTRV.

The protein belongs to the bacterial ribosomal protein bL28 family.

The protein is Large ribosomal subunit protein bL28 of Lacticaseibacillus paracasei (strain ATCC 334 / BCRC 17002 / CCUG 31169 / CIP 107868 / KCTC 3260 / NRRL B-441) (Lactobacillus paracasei).